A 432-amino-acid polypeptide reads, in one-letter code: Asparagine--tRNA ligase (432 aa).

Belongs to the class-II aminoacyl-tRNA synthetase family. In terms of assembly, homodimer.

Its subcellular location is the cytoplasm. It carries out the reaction tRNA(Asn) + L-asparagine + ATP = L-asparaginyl-tRNA(Asn) + AMP + diphosphate + H(+). The polypeptide is Asparagine--tRNA ligase (Lactobacillus helveticus (strain DPC 4571)).